The primary structure comprises 221 residues: Protein DEHYDRATION-INDUCED 19 homolog 2 (221 aa).

Disordered stretches follow at residues 1–24 (MEDD…TAAK) and 162–193 (VLPD…SDSD).

This sequence belongs to the Di19 family. In terms of processing, not phosphorylated in vitro by CPK3 or CPK11. As to expression, expressed in seedlings, roots, leaves, stems, flowers and siliques.

It is found in the cytoplasm. The protein resides in the nucleus. In Arabidopsis thaliana (Mouse-ear cress), this protein is Protein DEHYDRATION-INDUCED 19 homolog 2 (DI19-2).